Here is a 530-residue protein sequence, read N- to C-terminus: C2H2-type transcription factor MSN2 (530 aa).

2 consecutive C2H2-type zinc fingers follow at residues phenylalanine 409–proline 437 and phenylalanine 438–alanine 465.

It localises to the nucleus. Its subcellular location is the cytoplasm. In terms of biological role, transcription factor that acts as a key downstream transcription factor in the HOG1-MAPK pathway. Plays crucial roles in the regulation of dimorphism transition, aggravated pigmentation, conidiation, microsclerotia formation and subsequent virulence towards Spodoptera litura larvae. More specifically regulates the expression of genes involved in antioxidation, pigment biosynthesis and ion transport and storage. This Metarhizium rileyi (strain RCEF 4871) (Nomuraea rileyi) protein is C2H2-type transcription factor MSN2.